Consider the following 68-residue polypeptide: ATP synthase protein 8 (68 aa).

The chain crosses the membrane as a helical span at residues 8-24 (TWLTIITPTLLALFLIT). Lys-54 is subject to N6-acetyllysine; alternate. Residue Lys-54 is modified to N6-succinyllysine; alternate. Lys-57 carries the post-translational modification N6-acetyllysine.

This sequence belongs to the ATPase protein 8 family. As to quaternary structure, F-type ATPases have 2 components, CF(1) - the catalytic core - and CF(0) - the membrane proton channel. Component of an ATP synthase complex composed of ATP5PB, ATP5MC1, ATP5F1E, ATP5PD, ATP5ME, ATP5PF, ATP5MF, MT-ATP6, MT-ATP8, ATP5F1A, ATP5F1B, ATP5F1D, ATP5F1C, ATP5PO, ATP5MG, ATP5MK and ATP5MJ. Interacts with PRICKLE3.

The protein localises to the mitochondrion membrane. Mitochondrial membrane ATP synthase (F(1)F(0) ATP synthase or Complex V) produces ATP from ADP in the presence of a proton gradient across the membrane which is generated by electron transport complexes of the respiratory chain. F-type ATPases consist of two structural domains, F(1) - containing the extramembraneous catalytic core and F(0) - containing the membrane proton channel, linked together by a central stalk and a peripheral stalk. During catalysis, ATP synthesis in the catalytic domain of F(1) is coupled via a rotary mechanism of the central stalk subunits to proton translocation. Part of the complex F(0) domain. Minor subunit located with subunit a in the membrane. In Pongo pygmaeus (Bornean orangutan), this protein is ATP synthase protein 8 (MT-ATP8).